Reading from the N-terminus, the 380-residue chain is Tryptophan 2,3-dioxygenase (380 aa).

Residues 57-61 and R128 contribute to the substrate site; that span reads FIITH. Residue H313 coordinates heme. T328 is a substrate binding site.

The protein belongs to the tryptophan 2,3-dioxygenase family. In terms of assembly, homotetramer. Dimer of dimers. Heme is required as a cofactor.

It carries out the reaction L-tryptophan + O2 = N-formyl-L-kynurenine. Its pathway is amino-acid degradation; L-tryptophan degradation via kynurenine pathway; L-kynurenine from L-tryptophan: step 1/2. It functions in the pathway pigment biosynthesis; ommochrome biosynthesis. In terms of biological role, heme-dependent dioxygenase that catalyzes the oxidative cleavage of the L-tryptophan (L-Trp) pyrrole ring and converts L-tryptophan to N-formyl-L-kynurenine. Catalyzes the oxidative cleavage of the indole moiety. In Drosophila mojavensis (Fruit fly), this protein is Tryptophan 2,3-dioxygenase.